Here is a 402-residue protein sequence, read N- to C-terminus: Tryptophan synthase beta chain (402 aa).

Lysine 88 bears the N6-(pyridoxal phosphate)lysine mark.

It belongs to the TrpB family. As to quaternary structure, tetramer of two alpha and two beta chains. It depends on pyridoxal 5'-phosphate as a cofactor.

It carries out the reaction (1S,2R)-1-C-(indol-3-yl)glycerol 3-phosphate + L-serine = D-glyceraldehyde 3-phosphate + L-tryptophan + H2O. It participates in amino-acid biosynthesis; L-tryptophan biosynthesis; L-tryptophan from chorismate: step 5/5. Its function is as follows. The beta subunit is responsible for the synthesis of L-tryptophan from indole and L-serine. The chain is Tryptophan synthase beta chain (trpB) from Pasteurella multocida (strain Pm70).